The sequence spans 125 residues: Small ribosomal subunit protein uS13 (125 aa).

Positions Pro-97 to Ser-125 are disordered. Residues Gln-101–Ser-125 are compositionally biased toward basic residues.

It belongs to the universal ribosomal protein uS13 family. In terms of assembly, part of the 30S ribosomal subunit. Forms a loose heterodimer with protein S19. Forms two bridges to the 50S subunit in the 70S ribosome.

Its function is as follows. Located at the top of the head of the 30S subunit, it contacts several helices of the 16S rRNA. In the 70S ribosome it contacts the 23S rRNA (bridge B1a) and protein L5 of the 50S subunit (bridge B1b), connecting the 2 subunits; these bridges are implicated in subunit movement. Contacts the tRNAs in the A and P-sites. The chain is Small ribosomal subunit protein uS13 from Thermotoga maritima (strain ATCC 43589 / DSM 3109 / JCM 10099 / NBRC 100826 / MSB8).